The primary structure comprises 174 residues: Transcriptional repressor NrdR (174 aa).

A zinc finger lies at 3–34 (CPICHFPETDVIDTRKLYEGEVIRRRRKCRAC). An ATP-cone domain is found at 49 to 139 (LMVVKKDGTR…VYRSFADIGK (91 aa)). Residues 151 to 174 (EGTRNGHSSAATTDQGTTDNHSRM) form a disordered region. A compositionally biased stretch (polar residues) spans 155-174 (NGHSSAATTDQGTTDNHSRM).

The protein belongs to the NrdR family. Requires Zn(2+) as cofactor.

Negatively regulates transcription of bacterial ribonucleotide reductase nrd genes and operons by binding to NrdR-boxes. In Chloroflexus aggregans (strain MD-66 / DSM 9485), this protein is Transcriptional repressor NrdR.